We begin with the raw amino-acid sequence, 326 residues long: Flap endonuclease 1 (326 aa).

The tract at residues 1–100 (MGNAALRQLA…EEVQERRVAR (100 aa)) is N-domain. The Mg(2+) site is built by D28, D82, E154, E156, D175, D177, and D225. Positions 118–246 (AASRLEARTQ…TAISAINDHG (129 aa)) are I-domain. Residues 318–326 (VQTGLDEWI) are interaction with PCNA.

Belongs to the XPG/RAD2 endonuclease family. FEN1 subfamily. As to quaternary structure, interacts with PCNA. PCNA stimulates the nuclease activity without altering cleavage specificity. Mg(2+) is required as a cofactor.

In terms of biological role, structure-specific nuclease with 5'-flap endonuclease and 5'-3' exonuclease activities involved in DNA replication and repair. During DNA replication, cleaves the 5'-overhanging flap structure that is generated by displacement synthesis when DNA polymerase encounters the 5'-end of a downstream Okazaki fragment. Binds the unpaired 3'-DNA end and kinks the DNA to facilitate 5' cleavage specificity. Cleaves one nucleotide into the double-stranded DNA from the junction in flap DNA, leaving a nick for ligation. Also involved in the base excision repair (BER) pathway. Acts as a genome stabilization factor that prevents flaps from equilibrating into structures that lead to duplications and deletions. Also possesses 5'-3' exonuclease activity on nicked or gapped double-stranded DNA. The protein is Flap endonuclease 1 of Haloquadratum walsbyi (strain DSM 16790 / HBSQ001).